A 652-amino-acid polypeptide reads, in one-letter code: DNA polymerase epsilon subunit B (652 aa).

Belongs to the DNA polymerase epsilon subunit B family. In terms of assembly, heterotetramer. Consists of four subunits: POL2, DPB2, DPB3 and DPB4.

It localises to the nucleus. Functionally, as accessory component of the DNA polymerase epsilon (DNA polymerase II) participates in chromosomal DNA replication. The protein is DNA polymerase epsilon subunit B (DPB2) of Yarrowia lipolytica (strain CLIB 122 / E 150) (Yeast).